A 697-amino-acid chain; its full sequence is General transcription factor IIH subunit 1 (697 aa).

Residues 115 to 136 show a composition bias toward low complexity; it reads LPVSASNGSNTTSPTNGTSPIN. Disordered regions lie at residues 115–141 and 228–250; these read LPVS…TSPT and KNDS…ADVR. 2 consecutive BSD domains span residues 174–231 and 255–307; these read LSKL…KNDS and TPNA…YFYR. The span at 412 to 422 shows a compositional bias: basic and acidic residues; the sequence is KNLKKTKKDEN. A disordered region spans residues 412 to 462; the sequence is KNLKKTKKDENSTSTPTTTTTTTNTTNTTNTTTTTTTNNTTIKDPNLYNGD. A compositionally biased stretch (low complexity) spans 423–452; sequence STSTPTTTTTTTNTTNTTNTTTTTTTNNTT.

The protein belongs to the TFB1 family. As to quaternary structure, component of the 7-subunit TFIIH core complex composed of XPB/repB, XPD/repD, gtf2h1, gtf2h2, gtf2h3, gtf2h4 and gtf2h5, which is active in NER. The core complex associates with the 3-subunit CDK-activating kinase (CAK) module composed of cycH/cyclin H, cdk7 and mnat1 to form the 10-subunit holoenzyme (holo-TFIIH) active in transcription.

It localises to the nucleus. Functionally, component of the general transcription and DNA repair factor IIH (TFIIH) core complex, which is involved in general and transcription-coupled nucleotide excision repair (NER) of damaged DNA and, when complexed to CAK, in RNA transcription by RNA polymerase II. In NER, TFIIH acts by opening DNA around the lesion to allow the excision of the damaged oligonucleotide and its replacement by a new DNA fragment. In transcription, TFIIH has an essential role in transcription initiation. When the pre-initiation complex (PIC) has been established, TFIIH is required for promoter opening and promoter escape. Phosphorylation of the C-terminal tail (CTD) of the largest subunit of RNA polymerase II by the kinase module CAK controls the initiation of transcription. The chain is General transcription factor IIH subunit 1 (gtf2h1) from Dictyostelium discoideum (Social amoeba).